A 120-amino-acid chain; its full sequence is NAD(P)H-quinone oxidoreductase subunit 3 (120 aa).

3 consecutive transmembrane segments (helical) span residues 7–27, 64–84, and 89–109; these read YEYF…SLTA, MFAL…PWAV, and LGLL…VALV.

Belongs to the complex I subunit 3 family. NDH-1 can be composed of about 15 different subunits; different subcomplexes with different compositions have been identified which probably have different functions.

It localises to the cellular thylakoid membrane. The enzyme catalyses a plastoquinone + NADH + (n+1) H(+)(in) = a plastoquinol + NAD(+) + n H(+)(out). The catalysed reaction is a plastoquinone + NADPH + (n+1) H(+)(in) = a plastoquinol + NADP(+) + n H(+)(out). Functionally, NDH-1 shuttles electrons from an unknown electron donor, via FMN and iron-sulfur (Fe-S) centers, to quinones in the respiratory and/or the photosynthetic chain. The immediate electron acceptor for the enzyme in this species is believed to be plastoquinone. Couples the redox reaction to proton translocation, and thus conserves the redox energy in a proton gradient. Cyanobacterial NDH-1 also plays a role in inorganic carbon-concentration. The protein is NAD(P)H-quinone oxidoreductase subunit 3 of Microcystis aeruginosa (strain NIES-843 / IAM M-2473).